The primary structure comprises 168 residues: Photosystem I assembly protein Ycf3 (168 aa).

TPR repeat units lie at residues 35 to 68 (AFTYYRDGMSAQSEGNYAEALQNYYEAMRLEIDP), 72 to 105 (SYILYNIGLIHTSNGEHMKALEYYFRALERNPFL), and 120 to 153 (GEKAIQQGDSEIAEAWFDQAAEYWKQALALTPGN).

The protein belongs to the Ycf3 family.

Its subcellular location is the plastid membrane. Essential for the assembly of the photosystem I (PSI) complex. May act as a chaperone-like factor to guide the assembly of the PSI subunits. In Cuscuta exaltata (Tall dodder), this protein is Photosystem I assembly protein Ycf3.